Consider the following 398-residue polypeptide: Phosphoglycerate kinase (398 aa).

Substrate contacts are provided by residues 23–25, R38, 61–64, R120, and R153; these read DLN and HFGR. Residues K203, E325, and 355–358 contribute to the ATP site; that span reads GGDT.

The protein belongs to the phosphoglycerate kinase family. Monomer.

The protein localises to the cytoplasm. It carries out the reaction (2R)-3-phosphoglycerate + ATP = (2R)-3-phospho-glyceroyl phosphate + ADP. It participates in carbohydrate degradation; glycolysis; pyruvate from D-glyceraldehyde 3-phosphate: step 2/5. In Sphingopyxis alaskensis (strain DSM 13593 / LMG 18877 / RB2256) (Sphingomonas alaskensis), this protein is Phosphoglycerate kinase.